The chain runs to 388 residues: Chorismate synthase (388 aa).

2 residues coordinate NADP(+): arginine 39 and arginine 45. The disordered stretch occupies residues 95–115; sequence EKQKKIRRVSKPRPGHADLVG. Residues 98-108 are compositionally biased toward basic residues; that stretch reads KKIRRVSKPRP. FMN contacts are provided by residues 130–132, 251–252, glycine 296, 311–315, and arginine 337; these read RSS, NA, and KPIPT.

This sequence belongs to the chorismate synthase family. Homotetramer. Requires FMNH2 as cofactor.

It catalyses the reaction 5-O-(1-carboxyvinyl)-3-phosphoshikimate = chorismate + phosphate. Its pathway is metabolic intermediate biosynthesis; chorismate biosynthesis; chorismate from D-erythrose 4-phosphate and phosphoenolpyruvate: step 7/7. Functionally, catalyzes the anti-1,4-elimination of the C-3 phosphate and the C-6 proR hydrogen from 5-enolpyruvylshikimate-3-phosphate (EPSP) to yield chorismate, which is the branch point compound that serves as the starting substrate for the three terminal pathways of aromatic amino acid biosynthesis. This reaction introduces a second double bond into the aromatic ring system. This chain is Chorismate synthase, found in Enterococcus faecalis (strain ATCC 700802 / V583).